We begin with the raw amino-acid sequence, 294 residues long: Acetylglutamate kinase (294 aa).

Residues 60–61 (GG), R82, and N186 contribute to the substrate site.

This sequence belongs to the acetylglutamate kinase family. ArgB subfamily.

Its subcellular location is the cytoplasm. It catalyses the reaction N-acetyl-L-glutamate + ATP = N-acetyl-L-glutamyl 5-phosphate + ADP. It participates in amino-acid biosynthesis; L-arginine biosynthesis; N(2)-acetyl-L-ornithine from L-glutamate: step 2/4. Its function is as follows. Catalyzes the ATP-dependent phosphorylation of N-acetyl-L-glutamate. The protein is Acetylglutamate kinase of Methanospirillum hungatei JF-1 (strain ATCC 27890 / DSM 864 / NBRC 100397 / JF-1).